The primary structure comprises 662 residues: ATP-dependent zinc metalloprotease YME1 homolog (662 aa).

Residue G206–T213 coordinates ATP. Residue H425 participates in Zn(2+) binding. The active site involves E426. Positions 429 and 503 each coordinate Zn(2+).

It in the N-terminal section; belongs to the AAA ATPase family. In the C-terminal section; belongs to the peptidase M41 family. Requires Zn(2+) as cofactor.

Putative ATP-dependent protease. This Schistosoma mansoni (Blood fluke) protein is ATP-dependent zinc metalloprotease YME1 homolog.